The sequence spans 570 residues: Urease subunit alpha (570 aa).

The region spanning 131–570 (GGFDSHIHFI…LPMAQRYFMY (440 aa)) is the Urease domain. Residues H136, H138, and K219 each coordinate Ni(2+). K219 is subject to N6-carboxylysine. H221 lines the substrate pocket. The Ni(2+) site is built by H248 and H274. H322 serves as the catalytic Proton donor. Position 362 (D362) interacts with Ni(2+).

It belongs to the metallo-dependent hydrolases superfamily. Urease alpha subunit family. As to quaternary structure, heterotrimer of UreA (gamma), UreB (beta) and UreC (alpha) subunits. Three heterotrimers associate to form the active enzyme. Requires Ni cation as cofactor. In terms of processing, carboxylation allows a single lysine to coordinate two nickel ions.

Its subcellular location is the cytoplasm. It catalyses the reaction urea + 2 H2O + H(+) = hydrogencarbonate + 2 NH4(+). It participates in nitrogen metabolism; urea degradation; CO(2) and NH(3) from urea (urease route): step 1/1. The protein is Urease subunit alpha of Rhodopseudomonas palustris (strain HaA2).